Consider the following 339-residue polypeptide: Holliday junction branch migration complex subunit RuvB (339 aa).

Residues 1-22 (MIDADPTLRPEPLPEDNDRALR) are disordered. The interval 1–182 (MIDADPTLRP…FGIPTRLQFY (182 aa)) is large ATPase domain (RuvB-L). ATP contacts are provided by residues Leu21, Arg22, Gly63, Lys66, Thr67, Thr68, 129–131 (EDF), Arg172, Tyr182, and Arg219. A Mg(2+)-binding site is contributed by Thr67. The segment at 183–253 (TIDELFEIVS…LADGALTRLG (71 aa)) is small ATPAse domain (RuvB-S). The head domain (RuvB-H) stretch occupies residues 256–339 (QLGLDGADRR…PPKSQSDLFG (84 aa)). Arg292, Arg311, and Arg316 together coordinate DNA.

Belongs to the RuvB family. Homohexamer. Forms an RuvA(8)-RuvB(12)-Holliday junction (HJ) complex. HJ DNA is sandwiched between 2 RuvA tetramers; dsDNA enters through RuvA and exits via RuvB. An RuvB hexamer assembles on each DNA strand where it exits the tetramer. Each RuvB hexamer is contacted by two RuvA subunits (via domain III) on 2 adjacent RuvB subunits; this complex drives branch migration. In the full resolvosome a probable DNA-RuvA(4)-RuvB(12)-RuvC(2) complex forms which resolves the HJ.

It localises to the cytoplasm. The enzyme catalyses ATP + H2O = ADP + phosphate + H(+). Functionally, the RuvA-RuvB-RuvC complex processes Holliday junction (HJ) DNA during genetic recombination and DNA repair, while the RuvA-RuvB complex plays an important role in the rescue of blocked DNA replication forks via replication fork reversal (RFR). RuvA specifically binds to HJ cruciform DNA, conferring on it an open structure. The RuvB hexamer acts as an ATP-dependent pump, pulling dsDNA into and through the RuvAB complex. RuvB forms 2 homohexamers on either side of HJ DNA bound by 1 or 2 RuvA tetramers; 4 subunits per hexamer contact DNA at a time. Coordinated motions by a converter formed by DNA-disengaged RuvB subunits stimulates ATP hydrolysis and nucleotide exchange. Immobilization of the converter enables RuvB to convert the ATP-contained energy into a lever motion, pulling 2 nucleotides of DNA out of the RuvA tetramer per ATP hydrolyzed, thus driving DNA branch migration. The RuvB motors rotate together with the DNA substrate, which together with the progressing nucleotide cycle form the mechanistic basis for DNA recombination by continuous HJ branch migration. Branch migration allows RuvC to scan DNA until it finds its consensus sequence, where it cleaves and resolves cruciform DNA. This is Holliday junction branch migration complex subunit RuvB from Ruegeria sp. (strain TM1040) (Silicibacter sp.).